Reading from the N-terminus, the 125-residue chain is Ribonuclease P protein component (125 aa).

Belongs to the RnpA family. Consists of a catalytic RNA component (M1 or rnpB) and a protein subunit.

It carries out the reaction Endonucleolytic cleavage of RNA, removing 5'-extranucleotides from tRNA precursor.. Its function is as follows. RNaseP catalyzes the removal of the 5'-leader sequence from pre-tRNA to produce the mature 5'-terminus. It can also cleave other RNA substrates such as 4.5S RNA. The protein component plays an auxiliary but essential role in vivo by binding to the 5'-leader sequence and broadening the substrate specificity of the ribozyme. This is Ribonuclease P protein component from Clostridium botulinum (strain Eklund 17B / Type B).